Reading from the N-terminus, the 77-residue chain is Omega-conotoxin-like 6 (77 aa).

Residues 1–22 (MKLTCVVIIAVLLLTACQLITA) form the signal peptide. Positions 23 to 50 (DDSRGVQKHRSLRSTTKVSKSTSCMEAG) are excised as a propeptide. Intrachain disulfides connect cysteine 46–cysteine 61, cysteine 53–cysteine 64, and cysteine 60–cysteine 71.

Belongs to the conotoxin O1 superfamily. Expressed by the venom duct.

The protein localises to the secreted. In terms of biological role, omega-conotoxins act at presynaptic membranes, they bind and block voltage-gated calcium channels (Cav). In Conus striatus (Striated cone), this protein is Omega-conotoxin-like 6.